The chain runs to 139 residues: Small ribosomal subunit protein uS11 (139 aa).

Over residues M1–T13 the composition is skewed to low complexity. Positions M1 to Q30 are disordered. Residues K14–K23 are compositionally biased toward basic residues.

This sequence belongs to the universal ribosomal protein uS11 family. Part of the 30S ribosomal subunit. Interacts with proteins S7 and S18. Binds to IF-3.

Located on the platform of the 30S subunit, it bridges several disparate RNA helices of the 16S rRNA. Forms part of the Shine-Dalgarno cleft in the 70S ribosome. This chain is Small ribosomal subunit protein uS11, found in Roseiflexus sp. (strain RS-1).